A 378-amino-acid chain; its full sequence is Protein RecA (378 aa).

ATP is bound at residue 79-86 (GPESSGKT).

The protein belongs to the RecA family.

The protein localises to the cytoplasm. In terms of biological role, can catalyze the hydrolysis of ATP in the presence of single-stranded DNA, the ATP-dependent uptake of single-stranded DNA by duplex DNA, and the ATP-dependent hybridization of homologous single-stranded DNAs. It interacts with LexA causing its activation and leading to its autocatalytic cleavage. The polypeptide is Protein RecA (Streptococcus pyogenes serotype M12 (strain MGAS2096)).